The following is a 750-amino-acid chain: Phosphoribosylformylglycinamidine synthase subunit PurL (750 aa).

Residue H54 is part of the active site. ATP-binding residues include Y57 and K101. Position 103 (E103) interacts with Mg(2+). Substrate-binding positions include 104–107 (SHNH) and R126. H105 functions as the Proton acceptor in the catalytic mechanism. D127 provides a ligand contact to Mg(2+). Q251 lines the substrate pocket. D279 is a binding site for Mg(2+). 323–325 (ESQ) lines the substrate pocket. ATP-binding residues include D509 and G546. N547 contributes to the Mg(2+) binding site. S549 is a binding site for substrate.

Belongs to the FGAMS family. As to quaternary structure, monomer. Part of the FGAM synthase complex composed of 1 PurL, 1 PurQ and 2 PurS subunits.

The protein localises to the cytoplasm. The enzyme catalyses N(2)-formyl-N(1)-(5-phospho-beta-D-ribosyl)glycinamide + L-glutamine + ATP + H2O = 2-formamido-N(1)-(5-O-phospho-beta-D-ribosyl)acetamidine + L-glutamate + ADP + phosphate + H(+). It functions in the pathway purine metabolism; IMP biosynthesis via de novo pathway; 5-amino-1-(5-phospho-D-ribosyl)imidazole from N(2)-formyl-N(1)-(5-phospho-D-ribosyl)glycinamide: step 1/2. In terms of biological role, part of the phosphoribosylformylglycinamidine synthase complex involved in the purines biosynthetic pathway. Catalyzes the ATP-dependent conversion of formylglycinamide ribonucleotide (FGAR) and glutamine to yield formylglycinamidine ribonucleotide (FGAM) and glutamate. The FGAM synthase complex is composed of three subunits. PurQ produces an ammonia molecule by converting glutamine to glutamate. PurL transfers the ammonia molecule to FGAR to form FGAM in an ATP-dependent manner. PurS interacts with PurQ and PurL and is thought to assist in the transfer of the ammonia molecule from PurQ to PurL. The chain is Phosphoribosylformylglycinamidine synthase subunit PurL from Cutibacterium acnes (strain DSM 16379 / KPA171202) (Propionibacterium acnes).